The sequence spans 155 residues: 3-hydroxyacyl-[acyl-carrier-protein] dehydratase FabZ (155 aa).

H61 is a catalytic residue.

Belongs to the thioester dehydratase family. FabZ subfamily.

It is found in the cytoplasm. It carries out the reaction a (3R)-hydroxyacyl-[ACP] = a (2E)-enoyl-[ACP] + H2O. Functionally, involved in unsaturated fatty acids biosynthesis. Catalyzes the dehydration of short chain beta-hydroxyacyl-ACPs and long chain saturated and unsaturated beta-hydroxyacyl-ACPs. This chain is 3-hydroxyacyl-[acyl-carrier-protein] dehydratase FabZ, found in Synechococcus sp. (strain ATCC 27144 / PCC 6301 / SAUG 1402/1) (Anacystis nidulans).